The primary structure comprises 594 residues: APOBEC1 complementation factor (594 aa).

3 RRM domains span residues 56–134 (CEIF…ASVD), 136–218 (CRLF…WAEP), and 231–303 (KILY…LAKP). Residues 359-408 (HFPATKGHLSNRALIRTPSVREIYMNVPVGAAGVRGLGGRGYLAYTGLGR) form a required for nuclear localization region. Thr498 carries the post-translational modification Phosphothreonine.

As to quaternary structure, part of the apolipoprotein B mRNA editing complex with APOBEC1. Interacts with TNPO2; TNPO2 may be responsible for transport of A1CF into the nucleus. Interacts with SYNCRIP. Interacts with CELF2/CUGBP2. Interacts with RBM47. Isoforms 1 and 2 are widely expressed while isoforms 3 and 4 are restricted to liver and small intestine.

Its subcellular location is the nucleus. It localises to the endoplasmic reticulum. The protein localises to the cytoplasm. Its function is as follows. Essential component of the apolipoprotein B mRNA editing enzyme complex which is responsible for the postranscriptional editing of a CAA codon for Gln to a UAA codon for stop in APOB mRNA. Binds to APOB mRNA and is probably responsible for docking the catalytic subunit, APOBEC1, to the mRNA to allow it to deaminate its target cytosine. The complex also seems to protect the edited APOB mRNA from nonsense-mediated decay. The chain is APOBEC1 complementation factor (A1cf) from Rattus norvegicus (Rat).